The following is a 179-amino-acid chain: tRNA (cytidine(56)-2'-O)-methyltransferase (179 aa).

S-adenosyl-L-methionine is bound by residues L82, 112 to 116 (GAEKV), and 130 to 137 (VGNQPHSE).

This sequence belongs to the aTrm56 family. As to quaternary structure, homodimer.

The protein localises to the cytoplasm. The enzyme catalyses cytidine(56) in tRNA + S-adenosyl-L-methionine = 2'-O-methylcytidine(56) in tRNA + S-adenosyl-L-homocysteine + H(+). Functionally, specifically catalyzes the AdoMet-dependent 2'-O-ribose methylation of cytidine at position 56 in tRNAs. This chain is tRNA (cytidine(56)-2'-O)-methyltransferase, found in Methanococcus maripaludis (strain C5 / ATCC BAA-1333).